Consider the following 519-residue polypeptide: Probable cytosol aminopeptidase (519 aa).

Residues K251 and D256 each contribute to the Mn(2+) site. K263 is a catalytic residue. The Mn(2+) site is built by D274, D333, and E335. R337 is a catalytic residue. Low complexity predominate over residues 487 to 502; the sequence is VAPAAPAAPAAPAARP. The disordered stretch occupies residues 487–519; sequence VAPAAPAAPAAPAARPAAKRTGRSQGGLKRTAP.

This sequence belongs to the peptidase M17 family. Mn(2+) is required as a cofactor.

The protein resides in the cytoplasm. It carries out the reaction Release of an N-terminal amino acid, Xaa-|-Yaa-, in which Xaa is preferably Leu, but may be other amino acids including Pro although not Arg or Lys, and Yaa may be Pro. Amino acid amides and methyl esters are also readily hydrolyzed, but rates on arylamides are exceedingly low.. The enzyme catalyses Release of an N-terminal amino acid, preferentially leucine, but not glutamic or aspartic acids.. Presumably involved in the processing and regular turnover of intracellular proteins. Catalyzes the removal of unsubstituted N-terminal amino acids from various peptides. The polypeptide is Probable cytosol aminopeptidase (Verminephrobacter eiseniae (strain EF01-2)).